Consider the following 395-residue polypeptide: Protein hedgehog (395 aa).

A signal peptide spans 1–26 (MDNHSSVPWASAASVTCLSLDAKCHS). Positions 26–43 (SSSSSCSSKSTASSISAS) are enriched in low complexity. The segment at 26–46 (SSSSSCSSKSTASSISASPET) is disordered. Residues 27-82 (SSSSCSSKSTASSISASPETQTMRHIAHTQRCLSRLTSLVALLLIVLPMMFSPAHS) constitute a propeptide that is removed on maturation. Cys83 is lipidated: N-palmitoyl cysteine. Glu147, Glu148, Asp153, Thr183, Glu184, Asp187, and Asp189 together coordinate Ca(2+). Gly255 carries Cholesterol glycine ester lipidation.

This sequence belongs to the hedgehog family. Interacts with shf. Post-translationally, the C-terminal part of the hedgehog protein precursor displays an autoproteolysis activity that results in the cleavage of the full-length protein into two parts (N-product and C-product). In addition, the C-terminal part displays a cholesterol transferase activity that results by the covalent attachment of a cholesterol moiety to the C-terminal of the newly generated N-product. The N-product is the active species in both local and long-range signaling, whereas the C-product has no signaling activity. In terms of processing, cholesterylation is required for N-product targeting to lipid rafts and multimerization. N-palmitoylation by Rasp of the hedgehog N-product, within the secretory pathway, is required for the embryonic and larval patterning activities of the hedgehog signal.

It is found in the nucleus. Its subcellular location is the cytoplasm. The protein resides in the cell membrane. The catalysed reaction is glycyl-L-cysteinyl-[protein] + cholesterol + H(+) = [protein]-C-terminal glycyl cholesterol ester + N-terminal L-cysteinyl-[protein]. Its function is as follows. The C-terminal part of the hedgehog protein precursor displays an autoproteolysis activity that results in the cleavage of the full-length protein into two parts (N-product and C-product). In addition, the C-terminal part displays a cholesterol transferase activity that results by the covalent attachment of a cholesterol moiety to the C-terminal of the newly generated N-product. Once cleaved, the C-product has no signaling activity and diffuses from the cell. In terms of biological role, the dually lipidated hedgehog protein N-product is a morphogen which is essential for a variety of patterning events during development. Establishes the anterior-posterior axis of the embryonic segments and patterns the larval imaginal disks. Binds to the patched (ptc) receptor, which functions in association with smoothened (smo), to activate the transcription of target genes wingless (wg), decapentaplegic (dpp) and ptc. In the absence of hh, ptc represses the constitutive signaling activity of smo through fused (fu). Essential component of a signaling pathway which regulates the Duox-dependent gut immune response to bacterial uracil; required to activate Cad99C-dependent endosome formation, norpA-dependent Ca2+ mobilization and p38 MAPK, which are essential steps in the Duox-dependent production of reactive oxygen species (ROS) in response to intestinal bacterial infection. During photoreceptor differentiation, it up-regulates transcription of Ubr3, which in turn promotes the hh-signaling pathway by mediating the ubiquitination and degradation of cos. The polypeptide is Protein hedgehog (Drosophila simulans (Fruit fly)).